The sequence spans 133 residues: T-cell receptor beta chain V region 86T1 (133 aa).

Residues 1–21 (MSCRLLLYVSLCLVETALMNT) form the signal peptide. Residues 22 to 113 (KITQSPRYLI…SAVYFCASSH (92 aa)) form a v segment region. N-linked (GlcNAc...) asparagine glycosylation is found at N36 and N75. Cysteines 41 and 109 form a disulfide. Residues 114-133 (GQGVSGNTLYFGEGSRLIVV) are j segment.

In Mus musculus (Mouse), this protein is T-cell receptor beta chain V region 86T1.